Reading from the N-terminus, the 188-residue chain is Ribose 1,5-bisphosphate phosphokinase PhnN (188 aa).

9–16 (GPSGAGKD) is an ATP binding site.

The protein belongs to the ribose 1,5-bisphosphokinase family.

The enzyme catalyses alpha-D-ribose 1,5-bisphosphate + ATP = 5-phospho-alpha-D-ribose 1-diphosphate + ADP. The protein operates within metabolic intermediate biosynthesis; 5-phospho-alpha-D-ribose 1-diphosphate biosynthesis; 5-phospho-alpha-D-ribose 1-diphosphate from D-ribose 5-phosphate (route II): step 3/3. Catalyzes the phosphorylation of ribose 1,5-bisphosphate to 5-phospho-D-ribosyl alpha-1-diphosphate (PRPP). This chain is Ribose 1,5-bisphosphate phosphokinase PhnN, found in Pectobacterium parmentieri (strain WPP163) (Pectobacterium wasabiae (strain WPP163)).